The following is an 84-amino-acid chain: Delta-thalatoxin-Cad1a (84 aa).

An N-terminal signal peptide occupies residues 1 to 19 (MAYLKIVLVALMLVLAVSA). A propeptide spanning residues 20 to 33 (MRRPDQQDQDISVA) is cleaved from the precursor. Intrachain disulfides connect cysteine 38-cysteine 78, cysteine 40-cysteine 68, and cysteine 61-cysteine 79.

The protein belongs to the sea anemone sodium channel inhibitory toxin family. Type II subfamily.

The protein localises to the secreted. The protein resides in the nematocyst. Its function is as follows. Binds specifically to the voltage-gated sodium channel (Nav) and delays its inactivation. This Cryptodendrum adhaesivum (Adhesive sea anemone) protein is Delta-thalatoxin-Cad1a.